We begin with the raw amino-acid sequence, 253 residues long: Large ribosomal subunit protein uL10m (253 aa).

A mitochondrion-targeting transit peptide spans 1-24; that stretch reads MANLMQRSLPLTTTRTPVLQFLRF.

The protein belongs to the universal ribosomal protein uL10 family. As to quaternary structure, component of the mitochondrial ribosome large subunit (39S) which comprises a 16S rRNA and about 50 distinct proteins.

The protein localises to the mitochondrion. This is Large ribosomal subunit protein uL10m (mRpL10) from Drosophila pseudoobscura pseudoobscura (Fruit fly).